We begin with the raw amino-acid sequence, 187 residues long: Peptidyl-tRNA hydrolase (187 aa).

Tyrosine 18 contacts tRNA. Histidine 23 (proton acceptor) is an active-site residue. Positions 65, 67, and 113 each coordinate tRNA.

The protein belongs to the PTH family. Monomer.

The protein localises to the cytoplasm. It catalyses the reaction an N-acyl-L-alpha-aminoacyl-tRNA + H2O = an N-acyl-L-amino acid + a tRNA + H(+). Its function is as follows. Hydrolyzes ribosome-free peptidyl-tRNAs (with 1 or more amino acids incorporated), which drop off the ribosome during protein synthesis, or as a result of ribosome stalling. Functionally, catalyzes the release of premature peptidyl moieties from peptidyl-tRNA molecules trapped in stalled 50S ribosomal subunits, and thus maintains levels of free tRNAs and 50S ribosomes. The sequence is that of Peptidyl-tRNA hydrolase from Coxiella burnetii (strain RSA 331 / Henzerling II).